Here is a 478-residue protein sequence, read N- to C-terminus: MISVMSSAASFRTEKDLLGVLEVPAQAYYGIQTLRAVNNFRLSGVPISHYPKLVVGLAMVKQAAADANRELGQLSERKHAAISEACARLIRGDFHEEFVVDMIQGGAGTSTNMNANEVIANIALEAMGHQKGEYQYLHPNNDVNMAQSTNDAYPTAIRLGLLLGHDALLASLDSLIQAFAAKGAEFSHVLKMGRTQLQDAVPMTLGQEFRAFATTLGEDLARLKTLAPELLTEVNLGGTAIGTGINADPRYQALAVQRLATISGQPLVPAADLIEATSDMGAFVLFSGMLKRTAVKLSKICNDLRLLSSGPRTGINEINLPARQPGSSIMPGKVNPVIPEAVNQVAFQVIGNDLALTMAAEGGQLQLNVMEPLIAFKIFDSIRLLQRAMDMLREHCIVGITANEARCRELVEHSIGLVTALNPYIGYENATRIARIALESGRGVLELVREEGLLDDAMLDDILRPENMIAPRLVPLKA.

5 residues coordinate L-aspartate: Thr109, Ser148, Thr149, Asn150, and Thr195. Positions 326-335 (GSSIMPGKVN) are SS loop. Residue Ser327 is the Proton acceptor of the active site. Residues Ser328 and Lys333 each contribute to the L-aspartate site.

The protein belongs to the class-II fumarase/aspartase family. Aspartase subfamily. Homotetramer.

It catalyses the reaction L-aspartate = fumarate + NH4(+). In terms of biological role, catalyzes the reversible conversion of L-aspartate to fumarate and ammonia. This Pseudomonas fluorescens protein is Aspartate ammonia-lyase.